We begin with the raw amino-acid sequence, 425 residues long: Probable mitochondrial import inner membrane translocase subunit tin-44 (425 aa).

Residues 38–149 (FLNNLIDNVR…EHVEKVAEKV (112 aa)) are a coiled coil.

The protein belongs to the Tim44 family. As to quaternary structure, probable component of the PAM complex at least composed of a mitochondrial HSP70 protein, GrpE, tin-44, tim-16 and tim-14/dnj-21. The complex interacts with the tim-23 component of the TIM23 complex.

The protein localises to the mitochondrion inner membrane. In terms of biological role, essential component of the PAM complex, a complex required for the translocation of transit peptide-containing proteins from the inner membrane into the mitochondrial matrix in an ATP-dependent manner. Recruits mitochondrial HSP70 to drive protein translocation into the matrix using ATP as an energy source. The chain is Probable mitochondrial import inner membrane translocase subunit tin-44 from Caenorhabditis elegans.